A 65-amino-acid polypeptide reads, in one-letter code: Toxin Cbo5 (65 aa).

The region spanning 2-65 (KDGYLVDKTG…QTWPLPNKSC (64 aa)) is the LCN-type CS-alpha/beta domain. 4 cysteine pairs are disulfide-bonded: Cys12-Cys65, Cys16-Cys41, Cys25-Cys46, and Cys29-Cys48.

It belongs to the long (4 C-C) scorpion toxin superfamily. Sodium channel inhibitor family. Beta subfamily. As to expression, expressed by the venom gland.

The protein resides in the secreted. Its function is as follows. A probable toxin that has no activity on the tested sodium channels (when tested at 200 nM) and is not toxic to mice, crickets or sweet water shrimps. It resembles Beta toxins that bind voltage-independently at site-4 of sodium channels and shift the voltage of activation toward more negative potentials, thereby affecting sodium channel activation and promoting spontaneous and repetitive firing. This chain is Toxin Cbo5, found in Centruroides bonito (Scorpion).